The following is a 198-amino-acid chain: DNA damage response protein D (198 aa).

Residues 124–198 (SAAPTDPAGP…SEAGENTPAA (75 aa)) are disordered. Residues 136–180 (PGTDRAERTAAERTASERATHDRASTERPARPRRSAEPEAVRTED) show a composition bias toward basic and acidic residues.

Appears to contribute to D.radiodurans capacity to survive exposure to ionizing radiation. May play a role in DNA repair and genome reconstitution. The chain is DNA damage response protein D (ddrD) from Deinococcus radiodurans (strain ATCC 13939 / DSM 20539 / JCM 16871 / CCUG 27074 / LMG 4051 / NBRC 15346 / NCIMB 9279 / VKM B-1422 / R1).